Reading from the N-terminus, the 372-residue chain is N-methyl-L-tryptophan oxidase (372 aa).

4–34 contributes to the FAD binding site; that stretch reads DLIIIGSGSVGAAAGYYATRAGLNVLMTDAH. Residue Cys308 is modified to S-8alpha-FAD cysteine.

Belongs to the MSOX/MTOX family. MTOX subfamily. Monomer. The cofactor is FAD.

It catalyses the reaction N(alpha)-methyl-L-tryptophan + O2 + H2O = L-tryptophan + formaldehyde + H2O2. Catalyzes the oxidative demethylation of N-methyl-L-tryptophan. The chain is N-methyl-L-tryptophan oxidase from Shigella sonnei (strain Ss046).